Here is a 336-residue protein sequence, read N- to C-terminus: 4-hydroxy-3-methylbut-2-enyl diphosphate reductase (336 aa).

Cys-32 is a binding site for [4Fe-4S] cluster. (2E)-4-hydroxy-3-methylbut-2-enyl diphosphate contacts are provided by His-61 and His-94. Residues His-61 and His-94 each contribute to the dimethylallyl diphosphate site. Isopentenyl diphosphate contacts are provided by His-61 and His-94. Residue Cys-116 participates in [4Fe-4S] cluster binding. His-148 is a binding site for (2E)-4-hydroxy-3-methylbut-2-enyl diphosphate. His-148 contributes to the dimethylallyl diphosphate binding site. His-148 lines the isopentenyl diphosphate pocket. Glu-150 (proton donor) is an active-site residue. (2E)-4-hydroxy-3-methylbut-2-enyl diphosphate is bound at residue Thr-189. Cys-219 lines the [4Fe-4S] cluster pocket. Residues Ser-247, Ser-248, Asn-249, and Ser-292 each coordinate (2E)-4-hydroxy-3-methylbut-2-enyl diphosphate. Ser-247, Ser-248, Asn-249, and Ser-292 together coordinate dimethylallyl diphosphate. Residues Ser-247, Ser-248, Asn-249, and Ser-292 each coordinate isopentenyl diphosphate.

It belongs to the IspH family. [4Fe-4S] cluster serves as cofactor.

It catalyses the reaction isopentenyl diphosphate + 2 oxidized [2Fe-2S]-[ferredoxin] + H2O = (2E)-4-hydroxy-3-methylbut-2-enyl diphosphate + 2 reduced [2Fe-2S]-[ferredoxin] + 2 H(+). The catalysed reaction is dimethylallyl diphosphate + 2 oxidized [2Fe-2S]-[ferredoxin] + H2O = (2E)-4-hydroxy-3-methylbut-2-enyl diphosphate + 2 reduced [2Fe-2S]-[ferredoxin] + 2 H(+). The protein operates within isoprenoid biosynthesis; dimethylallyl diphosphate biosynthesis; dimethylallyl diphosphate from (2E)-4-hydroxy-3-methylbutenyl diphosphate: step 1/1. It participates in isoprenoid biosynthesis; isopentenyl diphosphate biosynthesis via DXP pathway; isopentenyl diphosphate from 1-deoxy-D-xylulose 5-phosphate: step 6/6. In terms of biological role, catalyzes the conversion of 1-hydroxy-2-methyl-2-(E)-butenyl 4-diphosphate (HMBPP) into a mixture of isopentenyl diphosphate (IPP) and dimethylallyl diphosphate (DMAPP). Acts in the terminal step of the DOXP/MEP pathway for isoprenoid precursor biosynthesis. In Gluconobacter oxydans (strain 621H) (Gluconobacter suboxydans), this protein is 4-hydroxy-3-methylbut-2-enyl diphosphate reductase.